Reading from the N-terminus, the 63-residue chain is Alpha-conotoxin-like PuSG1.2 (63 aa).

An N-terminal signal peptide occupies residues 1 to 21 (MRCLALLVVTLLLFTATATTG). Residues 22–43 (ASNGMNAAASGEAPDSISLAVR) constitute a propeptide that is removed on maturation. 2 disulfide bridges follow: C46-C52 and C47-C60. The segment at 48–50 (PDP) is lacks the Ser-Xaa-Pro motif that is crucial for potent interaction with nAChR.

The protein belongs to the conotoxin A superfamily. Expressed by the salivary gland.

The protein resides in the secreted. In terms of biological role, alpha-conopeptides-like may act on postsynaptic membranes, they bind to the nicotinic acetylcholine receptors (nAChR) and thus inhibit them. Has possibly a distinct nAChR binding mode from other alpha-conotoxins, due to a different three residue motif (lacks the Ser-Xaa-Pro motif). In Conus pulicarius (Flea-bitten cone), this protein is Alpha-conotoxin-like PuSG1.2.